Consider the following 361-residue polypeptide: tRNA/tmRNA (uracil-C(5))-methyltransferase (361 aa).

Residues glutamine 183, tyrosine 211, asparagine 216, glutamate 232, and aspartate 294 each coordinate S-adenosyl-L-methionine. Catalysis depends on cysteine 319, which acts as the Nucleophile. The Proton acceptor role is filled by glutamate 353.

The protein belongs to the class I-like SAM-binding methyltransferase superfamily. RNA M5U methyltransferase family. TrmA subfamily.

It carries out the reaction uridine(54) in tRNA + S-adenosyl-L-methionine = 5-methyluridine(54) in tRNA + S-adenosyl-L-homocysteine + H(+). The catalysed reaction is uridine(341) in tmRNA + S-adenosyl-L-methionine = 5-methyluridine(341) in tmRNA + S-adenosyl-L-homocysteine + H(+). Dual-specificity methyltransferase that catalyzes the formation of 5-methyluridine at position 54 (m5U54) in all tRNAs, and that of position 341 (m5U341) in tmRNA (transfer-mRNA). The polypeptide is tRNA/tmRNA (uracil-C(5))-methyltransferase (Acinetobacter baylyi (strain ATCC 33305 / BD413 / ADP1)).